A 474-amino-acid polypeptide reads, in one-letter code: tRNA-2-methylthio-N(6)-dimethylallyladenosine synthase (474 aa).

One can recognise an MTTase N-terminal domain in the interval 3–120 (KKLHIKTWGC…LPEMINHVQG (118 aa)). The [4Fe-4S] cluster site is built by C12, C49, C83, C157, C161, and C164. The Radical SAM core domain occupies 143 to 375 (RAEGPTAFVS…QQRISQQAME (233 aa)). In terms of domain architecture, TRAM spans 378-441 (RKMVGTVQRV…ASSLRGILLR (64 aa)).

The protein belongs to the methylthiotransferase family. MiaB subfamily. In terms of assembly, monomer. [4Fe-4S] cluster serves as cofactor.

It is found in the cytoplasm. It catalyses the reaction N(6)-dimethylallyladenosine(37) in tRNA + (sulfur carrier)-SH + AH2 + 2 S-adenosyl-L-methionine = 2-methylsulfanyl-N(6)-dimethylallyladenosine(37) in tRNA + (sulfur carrier)-H + 5'-deoxyadenosine + L-methionine + A + S-adenosyl-L-homocysteine + 2 H(+). Functionally, catalyzes the methylthiolation of N6-(dimethylallyl)adenosine (i(6)A), leading to the formation of 2-methylthio-N6-(dimethylallyl)adenosine (ms(2)i(6)A) at position 37 in tRNAs that read codons beginning with uridine. The sequence is that of tRNA-2-methylthio-N(6)-dimethylallyladenosine synthase from Yersinia pseudotuberculosis serotype O:1b (strain IP 31758).